Reading from the N-terminus, the 405-residue chain is Secreted aspartic protease FUS4 (405 aa).

The signal sequence occupies residues 1–24 (MLAIATLHVALQVFGAFSLSHAAA). One can recognise a Peptidase A1 domain in the interval 49–400 (YLFNVTVGSP…NFEERSFGLA (352 aa)). Residues Asn-52, Asn-61, Asn-107, and Asn-123 are each glycosylated (N-linked (GlcNAc...) asparagine). A disulfide bridge links Cys-318 with Cys-356.

This sequence belongs to the peptidase A1 family.

Its subcellular location is the secreted. Secreted aspartic protease; part of the gene cluster that mediates the biosynthesis of the mycotoxin fusarin C. Within the cluster, FUS1, FUS2, FUS8 and FUS9 are sufficient for fusarin production. The other FUS cluster members are not essential for fusarin C biosynthesis. This is Secreted aspartic protease FUS4 from Gibberella fujikuroi (strain CBS 195.34 / IMI 58289 / NRRL A-6831) (Bakanae and foot rot disease fungus).